The chain runs to 715 residues: Protein DENND6 homolog (715 aa).

Residues 13 to 58 are a coiled coil; the sequence is MIFKEEEIKKQQILLEKEEKEKQEQQQKKLNKDNIFKLEEEGKKLE. Positions 96–273 constitute a uDENN domain; that stretch reads NSFCIINFDL…VKQHQLGGGS (178 aa). Disordered regions lie at residues 269 to 296 and 392 to 416; these read LGGGSGGGLSSSPSSSSGGGNIPTSNTT and SGTRPDDSNNNNNQDDSEYNNNNNN. The region spanning 299-476 is the cDENN domain; that stretch reads SPSIWSEMKL…KDLLTRHVLD (178 aa). The segment covering 399–416 has biased composition (low complexity); sequence SNNNNNQDDSEYNNNNNN. A dDENN domain is found at 478–600; that stretch reads KEKILSEYKP…KQWLDDKRAQ (123 aa).

The protein belongs to the DENND6 family.

In Dictyostelium discoideum (Social amoeba), this protein is Protein DENND6 homolog.